Here is a 122-residue protein sequence, read N- to C-terminus: Small ribosomal subunit protein uS13 (122 aa).

The segment at 95–122 (GLPVRGQRTHTNARTRKGPAKSIAGKKK) is disordered.

This sequence belongs to the universal ribosomal protein uS13 family. In terms of assembly, part of the 30S ribosomal subunit. Forms a loose heterodimer with protein S19. Forms two bridges to the 50S subunit in the 70S ribosome.

In terms of biological role, located at the top of the head of the 30S subunit, it contacts several helices of the 16S rRNA. In the 70S ribosome it contacts the 23S rRNA (bridge B1a) and protein L5 of the 50S subunit (bridge B1b), connecting the 2 subunits; these bridges are implicated in subunit movement. Contacts the tRNAs in the A and P-sites. This chain is Small ribosomal subunit protein uS13, found in Rhodopseudomonas palustris (strain BisB18).